Reading from the N-terminus, the 101-residue chain is MSCCNPCVPCQPCGPTPLANSCNEPCVRQCQNSTVVIEPSPVVVTLPGPILSSFPQNTVVGSSTSAAVGSILSCEGVPINSGGFDLSCITSRYCGNRCRPC.

S2 carries the post-translational modification N-acetylserine.

The protein belongs to the avian keratin family. As to quaternary structure, the avian keratins (F-ker, S-ker, C-ker and B-ker) are a complex mixture of very similar polypeptides.

This is Feather keratin Cos1-1/Cos1-3/Cos2-1 from Columba livia (Rock dove).